The chain runs to 319 residues: 33 kDa chaperonin (319 aa).

Residues 1–10 are compositionally biased toward basic and acidic residues; that stretch reads MTDASGSERL. Positions 1–25 are disordered; it reads MTDASGSERLKRAKGISEGTPSSLP. Cystine bridges form between Cys261–Cys263 and Cys294–Cys297.

It belongs to the HSP33 family. Post-translationally, under oxidizing conditions two disulfide bonds are formed involving the reactive cysteines. Under reducing conditions zinc is bound to the reactive cysteines and the protein is inactive.

The protein resides in the cytoplasm. Functionally, redox regulated molecular chaperone. Protects both thermally unfolding and oxidatively damaged proteins from irreversible aggregation. Plays an important role in the bacterial defense system toward oxidative stress. The polypeptide is 33 kDa chaperonin (Synechococcus sp. (strain JA-2-3B'a(2-13)) (Cyanobacteria bacterium Yellowstone B-Prime)).